Consider the following 278-residue polypeptide: Elongation factor Ts 1, mitochondrial (278 aa).

It belongs to the EF-Ts family.

It is found in the mitochondrion. Functionally, associates with the EF-Tu.GDP complex and induces the exchange of GDP to GTP. It remains bound to the aminoacyl-tRNA.EF-Tu.GTP complex up to the GTP hydrolysis stage on the ribosome. The polypeptide is Elongation factor Ts 1, mitochondrial (Trypanosoma cruzi (strain CL Brener)).